Reading from the N-terminus, the 90-residue chain is Large ribosomal subunit protein bL27 (90 aa).

Positions 1 to 20 are disordered; the sequence is MAHKKAGGSSRNGRDSAGKR.

The protein belongs to the bacterial ribosomal protein bL27 family.

This chain is Large ribosomal subunit protein bL27, found in Nitrobacter hamburgensis (strain DSM 10229 / NCIMB 13809 / X14).